Consider the following 37-residue polypeptide: Photosystem II reaction center protein T (37 aa).

A helical transmembrane segment spans residues 3 to 23; it reads ALVYTFLLVSTLGILFFAIFF.

Belongs to the PsbT family. PSII is composed of 1 copy each of membrane proteins PsbA, PsbB, PsbC, PsbD, PsbE, PsbF, PsbH, PsbI, PsbJ, PsbK, PsbL, PsbM, PsbT, PsbY, PsbZ, Psb30/Ycf12, at least 3 peripheral proteins of the oxygen-evolving complex and a large number of cofactors. It forms dimeric complexes.

It localises to the plastid. Its subcellular location is the chloroplast thylakoid membrane. Functionally, found at the monomer-monomer interface of the photosystem II (PS II) dimer, plays a role in assembly and dimerization of PSII. PSII is a light-driven water plastoquinone oxidoreductase, using light energy to abstract electrons from H(2)O, generating a proton gradient subsequently used for ATP formation. The polypeptide is Photosystem II reaction center protein T (Ephedra sinica (Chinese ephedra)).